Here is an 867-residue protein sequence, read N- to C-terminus: GATOR2 complex protein Mio (867 aa).

WD repeat units follow at residues 51-86, 100-144, 149-188, 190-228, and 231-272; these read ANESRYQYARCVAASYHSDQPIIAVGLADGKVGICN, RQQR…PKET, GVGESANSICWDRNHRTVIAGMSQKMIKLFDLRQSNATCQ, IQTKTVQGLSVSPNGNYLCSYVDSVITLWDPRNIKSPLR, and QSSK…TDNS. A compositionally biased stretch (low complexity) spans 350 to 376; the sequence is PASPTSTAATPTQQQPTSSCSTNSGSS. The segment at 350 to 378 is disordered; the sequence is PASPTSTAATPTQQQPTSSCSTNSGSSLD. The segment at 739 to 777 adopts a C4-type zinc-finger fold; it reads LSCNFCGKSVSNALLDEPRPRSTTTSTNRLSSCPSCRKP. The Zn(2+) site is built by Cys741, Cys744, Cys771, Cys774, Cys784, Cys821, Cys824, His826, His829, His832, Cys843, Cys848, and Cys852. The segment at 778-857 adopts an RING-type; atypical zinc-finger fold; that stretch reads LPRCSLCLMH…CNCRCFDMDG (80 aa).

It belongs to the WD repeat mio family. Component of the GATOR complex consisting of mio, Nup44A/Seh1, Im11, Nplr3, Nplr2, Wdr24, Wdr59 and Sec13. Within the GATOR complex, probable component of the GATOR2 subcomplex which is likely composed of mio, Nup44A/Seh1, Wdr24, Wdr59 and Sec13. Interacts with Wdr24. Interacts with nucleoporin Nup44A/Seh1. The GATOR2 complex associates with unmet in the absence of S-adenosyl-L-methionine; the mio-Wdr24-Nup44A subcomplex is essential and sufficient for this interaction while Wdr59 and Sec13 are dispensable. This association acts as a nutrient sensor to inhibit mTORC1 signaling in the absence of methionine. Present in the oocyte.

The protein localises to the nucleus. Its subcellular location is the lysosome. Functionally, an essential component of the GATOR subcomplex GATOR2 which functions as an activator of the amino acid-sensing branch of the mTORC1 signaling pathway. The two GATOR subcomplexes, GATOR1 and GATOR2, regulate the mTORC1 pathway in order to mediate metabolic homeostasis, female gametogenesis and the response to amino acid limitation and complete starvation. GATOR2 activates the mTORC1 signaling pathway through the inhibition of the GATOR1 subcomplex, controlling the switch to cell proliferation and growth under nutrient replete conditions and during female oocyte development. This component is required for activating mTORC1 specifically in germline cells to promote cell growth and maintain the oocyte fate. GATOR1 and GATOR2 act at different stages of oogenesis to regulate mTORC1 in order to control meiotic entry and promote oocyte growth and development. After exactly four mitotic cyst divisions, the GATOR1 complex members (Iml1, Nprl2 and Nprl3) down-regulate mTORC1 to slow cellular metabolism and promote the mitotic/meiotic transition. At later stages of oogenesis, the mio and Nup44A components of the GATOR2 complex inhibit GATOR1 and thus activate mTORC1 to promote meiotic progression, and drive oocyte growth and development. In addition to its role in the regulation of the mTORC1 complex, functions independently of mTORC1 to prevent the inappropriate accumulation of autolysosomes in germline tissues. This Drosophila melanogaster (Fruit fly) protein is GATOR2 complex protein Mio.